The sequence spans 395 residues: MTPPIKSPSSSSVDYGKLSEQLMIAYTKDVLQRNLQKFHGEQHRQQFKQLLNQPVIKSIHSLSGIIVRYRHNNSELDKALDTIDLPKIFERLEIREKTNKDKNLDYDDLLVLELLNYFKNDFFKWVNSPDCPSCGSNEDVQGLGAINPSSSKTISQSQAIIDQVSVIEVHECKKCKQKIEFPRINNPVTLLTTRRGRCGEWVNCFMLILQALIGGGDDDSDRIRYVWNQEDHVWCEYYSLSSKRWIHLDPCEGVYDEPLLYCNNWGKRMSYVIGFNYNYMIDLSDKYIVPEKQIPKNSIVNVQNVNFVISYSNGINQLKHFKRIEQQQQQQEVDVNEQRNLAFLKLYHNFLVPYNKEINQLKPELTKTTPSTDLPSGRQSGSTEWTKSRGENGES.

Zn(2+) is bound by residues Cys-131, Cys-134, Cys-172, and Cys-175. Cys-198 serves as the catalytic Nucleophile. Active-site residues include His-232 and Asp-249. Glu-252 is a binding site for substrate. Residues 363 to 395 are disordered; sequence PELTKTTPSTDLPSGRQSGSTEWTKSRGENGES. Positions 366-385 are enriched in polar residues; it reads TKTTPSTDLPSGRQSGSTEW. A compositionally biased stretch (basic and acidic residues) spans 386 to 395; it reads TKSRGENGES.

The protein belongs to the transglutaminase-like superfamily. PNGase family. It depends on Zn(2+) as a cofactor.

It localises to the cytoplasm. The enzyme catalyses Hydrolysis of an N(4)-(acetyl-beta-D-glucosaminyl)asparagine residue in which the glucosamine residue may be further glycosylated, to yield a (substituted) N-acetyl-beta-D-glucosaminylamine and a peptide containing an aspartate residue.. In terms of biological role, specifically deglycosylates the denatured form of N-linked glycoproteins in the cytoplasm and assists their proteasome-mediated degradation. Cleaves the beta-aspartyl-glucosamine (GlcNAc) of the glycan and the amide side chain of Asn, converting Asn to Asp. Prefers proteins containing high-mannose over those bearing complex type oligosaccharides. Can recognize misfolded proteins in the endoplasmic reticulum that are exported to the cytosol to be destroyed and deglycosylate them, while it has no activity toward native proteins. Deglycosylation is a prerequisite for subsequent proteasome-mediated degradation of some, but not all, misfolded glycoproteins. The chain is Peptide-N(4)-(N-acetyl-beta-glucosaminyl)asparagine amidase (PNG1) from Candida albicans (strain SC5314 / ATCC MYA-2876) (Yeast).